Reading from the N-terminus, the 440-residue chain is Microtubule-associated tumor suppressor 1 homolog (440 aa).

Positions 106–401 form a coiled coil; the sequence is IQHLLSEREE…RLSMENEELL (296 aa). Ser373, Ser394, Ser415, Ser425, Ser429, Ser431, Ser433, Ser434, and Ser438 each carry phosphoserine. The tract at residues 407–440 is disordered; that stretch reads GDLCSPKRSPTSSAIPFQSPRNSGSFSSPSISPR. Residues 425–440 are compositionally biased toward low complexity; sequence SPRNSGSFSSPSISPR.

The protein belongs to the MTUS1 family. Homodimer. Interacts with AGTR2. Interacts with PTPN6. As to expression, present in neurons (at protein level).

The protein localises to the mitochondrion. Its subcellular location is the golgi apparatus. The protein resides in the cell membrane. It localises to the nucleus. Cooperates with AGTR2 to inhibit ERK2 activation and cell proliferation. May be required for AGTR2 cell surface expression. Together with PTPN6, induces UBE2V2 expression upon angiotensin-II stimulation. This is Microtubule-associated tumor suppressor 1 homolog (Mtus1) from Rattus norvegicus (Rat).